The sequence spans 233 residues: Homeobox protein Hox-D4a (233 aa).

An Antp-type hexapeptide motif is present at residues 124 to 129; it reads VYPWMK. The segment at residues 145–204 is a DNA-binding region (homeobox); that stretch reads PKRSRTAYTRQQVLELEKEFHFNRYLTRRRRIEIAHTLCLSERQIKIWFQNRRMKWTKDH. Positions 203-233 are disordered; sequence DHKLPNTKGRSAPASSHLQSIHKDQTDITSL. The span at 223 to 233 shows a compositional bias: basic and acidic residues; that stretch reads IHKDQTDITSL.

Belongs to the Antp homeobox family. Deformed subfamily.

It localises to the nucleus. Functionally, sequence-specific transcription factor which is part of a developmental regulatory system that provides cells with specific positional identities on the anterior-posterior axis. This is Homeobox protein Hox-D4a (hoxd4a) from Takifugu rubripes (Japanese pufferfish).